The primary structure comprises 405 residues: Phosphatidylinositol 5-phosphate 4-kinase type-2 alpha (405 aa).

Residues 32–404 enclose the PIPK domain; that stretch reads ASDPLLSVLM…RFLDFIANIL (373 aa). The interval 287–326 is disordered; it reads QEEVECEENDGEDEGESDGTHPIGTPPDSPGNTLNSSLPL. Positions 288 to 303 are enriched in acidic residues; it reads EEVECEENDGEDEGES.

In terms of assembly, homodimer. Post-translationally, phosphorylated in tyrosines. Phosphorylation is induced by light and increases kinase activity.

The protein localises to the cell membrane. Its subcellular location is the nucleus. It is found in the lysosome. The protein resides in the cytoplasm. It catalyses the reaction a 1,2-diacyl-sn-glycero-3-phospho-(1D-myo-inositol-5-phosphate) + ATP = a 1,2-diacyl-sn-glycero-3-phospho-(1D-myo-inositol-4,5-bisphosphate) + ADP + H(+). It carries out the reaction 1,2-dihexadecanoyl-sn-glycero-3-phospho-(1D-myo-inositol-5-phosphate) + ATP = 1,2-dihexadecanoyl-sn-glycero-3-phospho-(1D-myo-inositol-4,5-bisphosphate) + ADP + H(+). The enzyme catalyses 1,2-dihexadecanoyl-sn-glycero-3-phospho-(1D-myo-inositol-5-phosphate) + GTP = 1,2-dihexadecanoyl-sn-glycero-3-phospho-(1D-myo-inositol-4,5-bisphosphate) + GDP + H(+). With respect to regulation, in rod outer segments, activated by light. Functionally, catalyzes the phosphorylation of phosphatidylinositol 5-phosphate (PtdIns5P) on the fourth hydroxyl of the myo-inositol ring, to form phosphatidylinositol 4,5-bisphosphate (PtdIns(4,5)P2). Has both ATP- and GTP-dependent kinase activities. This chain is Phosphatidylinositol 5-phosphate 4-kinase type-2 alpha (PIP4K2A), found in Gallus gallus (Chicken).